Consider the following 432-residue polypeptide: MTQAISDIKAYMQQVGKHARDASRQLAAANTGDKNAALLIIYEQLKQAKDEILAANKIDMDKGRSNNLDAALLDRLALNESRFEAMLQGLKDVAALPDPIGEVTDMTYRPSGIQLGKMRVPLGVVGMIYESRPNVTLEAASLALKSGNAIILRGGSEAYESNQAIAKYILSGLKQAGLPEHGVQVLQTTDRAAVGELITLTEYVDVIVPRGGKGLIARISQDARVPVIKHLDGNCHTFIDSDADPEIAIKVSVNAKTHRYGTCNTMETLLVDQAIANELLPQIAEAIVAADDAMQLRLDAASRTILQDNAKLGGHLSDATDSDWDTEYLAPILAVKIIDGLDAAIDHINTHGSHHTDVIITNNYSKSQRFIREVDSASVMINASSRFADGFEYGLGAEIGISTDKIHARGPVGLNGLTSQKWIVYGHGEVRS.

It belongs to the gamma-glutamyl phosphate reductase family.

The protein resides in the cytoplasm. It carries out the reaction L-glutamate 5-semialdehyde + phosphate + NADP(+) = L-glutamyl 5-phosphate + NADPH + H(+). It participates in amino-acid biosynthesis; L-proline biosynthesis; L-glutamate 5-semialdehyde from L-glutamate: step 2/2. Functionally, catalyzes the NADPH-dependent reduction of L-glutamate 5-phosphate into L-glutamate 5-semialdehyde and phosphate. The product spontaneously undergoes cyclization to form 1-pyrroline-5-carboxylate. This Psychrobacter sp. (strain PRwf-1) protein is Gamma-glutamyl phosphate reductase.